The primary structure comprises 179 residues: NADH-quinone oxidoreductase subunit B 1 (179 aa).

Cysteine 38, cysteine 39, cysteine 104, and cysteine 133 together coordinate [4Fe-4S] cluster.

This sequence belongs to the complex I 20 kDa subunit family. In terms of assembly, NDH-1 is composed of 14 different subunits. Subunits NuoB, C, D, E, F, and G constitute the peripheral sector of the complex. It depends on [4Fe-4S] cluster as a cofactor.

Its subcellular location is the cell membrane. It carries out the reaction a quinone + NADH + 5 H(+)(in) = a quinol + NAD(+) + 4 H(+)(out). NDH-1 shuttles electrons from NADH, via FMN and iron-sulfur (Fe-S) centers, to quinones in the respiratory chain. The immediate electron acceptor for the enzyme in this species is believed to be ubiquinone. Couples the redox reaction to proton translocation (for every two electrons transferred, four hydrogen ions are translocated across the cytoplasmic membrane), and thus conserves the redox energy in a proton gradient. The chain is NADH-quinone oxidoreductase subunit B 1 from Herpetosiphon aurantiacus (strain ATCC 23779 / DSM 785 / 114-95).